Here is a 213-residue protein sequence, read N- to C-terminus: Large ribosomal subunit protein uL1 (213 aa).

The protein belongs to the universal ribosomal protein uL1 family. Part of the 50S ribosomal subunit.

Its function is as follows. Binds directly to 23S rRNA. Probably involved in E site tRNA release. Functionally, protein L1 is also a translational repressor protein, it controls the translation of its operon by binding to its mRNA. This Methanosarcina barkeri (strain Fusaro / DSM 804) protein is Large ribosomal subunit protein uL1.